A 370-amino-acid polypeptide reads, in one-letter code: 3-dehydroquinate synthase (370 aa).

NAD(+) is bound by residues 108–112 (GVIGD), 132–133 (TT), Lys145, and Lys154. 3 residues coordinate Zn(2+): Glu187, His249, and His267.

This sequence belongs to the sugar phosphate cyclases superfamily. Dehydroquinate synthase family. Co(2+) is required as a cofactor. The cofactor is Zn(2+). NAD(+) serves as cofactor.

It is found in the cytoplasm. It catalyses the reaction 7-phospho-2-dehydro-3-deoxy-D-arabino-heptonate = 3-dehydroquinate + phosphate. It participates in metabolic intermediate biosynthesis; chorismate biosynthesis; chorismate from D-erythrose 4-phosphate and phosphoenolpyruvate: step 2/7. Catalyzes the conversion of 3-deoxy-D-arabino-heptulosonate 7-phosphate (DAHP) to dehydroquinate (DHQ). In Cereibacter sphaeroides (strain ATCC 17023 / DSM 158 / JCM 6121 / CCUG 31486 / LMG 2827 / NBRC 12203 / NCIMB 8253 / ATH 2.4.1.) (Rhodobacter sphaeroides), this protein is 3-dehydroquinate synthase.